The sequence spans 90 residues: DNA-directed RNA polymerase subunit Rpo11 (90 aa).

Belongs to the archaeal Rpo11/eukaryotic RPB11/RPC19 RNA polymerase subunit family. In terms of assembly, part of the RNA polymerase complex.

The protein resides in the cytoplasm. It catalyses the reaction RNA(n) + a ribonucleoside 5'-triphosphate = RNA(n+1) + diphosphate. Functionally, DNA-dependent RNA polymerase (RNAP) catalyzes the transcription of DNA into RNA using the four ribonucleoside triphosphates as substrates. The polypeptide is DNA-directed RNA polymerase subunit Rpo11 (Metallosphaera sedula (strain ATCC 51363 / DSM 5348 / JCM 9185 / NBRC 15509 / TH2)).